The sequence spans 306 residues: Tryptophan 2,3-dioxygenase (306 aa).

Residues 1–29 (MQPPGDDAAPRCPFAGAHAPDAPHVPEAA) are disordered. Substrate is bound by residues 75–79 (FIIQH), Tyr137, and Arg141. His264 contacts heme. Residue Thr278 participates in substrate binding.

The protein belongs to the tryptophan 2,3-dioxygenase family. In terms of assembly, homotetramer. It depends on heme as a cofactor.

It carries out the reaction L-tryptophan + O2 = N-formyl-L-kynurenine. It participates in amino-acid degradation; L-tryptophan degradation via kynurenine pathway; L-kynurenine from L-tryptophan: step 1/2. In terms of biological role, heme-dependent dioxygenase that catalyzes the oxidative cleavage of the L-tryptophan (L-Trp) pyrrole ring and converts L-tryptophan to N-formyl-L-kynurenine. Catalyzes the oxidative cleavage of the indole moiety. This is Tryptophan 2,3-dioxygenase from Burkholderia mallei (strain NCTC 10247).